The primary structure comprises 629 residues: tRNA uridine 5-carboxymethylaminomethyl modification enzyme MnmG (629 aa).

13-18 (GGGHAG) provides a ligand contact to FAD. 273-287 (GPRYCPSIEDKITRF) lines the NAD(+) pocket.

The protein belongs to the MnmG family. In terms of assembly, homodimer. Heterotetramer of two MnmE and two MnmG subunits. It depends on FAD as a cofactor.

Its subcellular location is the cytoplasm. NAD-binding protein involved in the addition of a carboxymethylaminomethyl (cmnm) group at the wobble position (U34) of certain tRNAs, forming tRNA-cmnm(5)s(2)U34. The polypeptide is tRNA uridine 5-carboxymethylaminomethyl modification enzyme MnmG (Aeromonas hydrophila subsp. hydrophila (strain ATCC 7966 / DSM 30187 / BCRC 13018 / CCUG 14551 / JCM 1027 / KCTC 2358 / NCIMB 9240 / NCTC 8049)).